The primary structure comprises 196 residues: Regulator of G-protein signaling 8 (196 aa).

Position 26 is a phosphoserine (Ser26). Positions 72–188 (SFDVLLSHKY…LRSKMYLDLL (117 aa)) constitute an RGS domain.

In terms of assembly, interacts with GNAO1 and GNAI3.

The protein resides in the cell membrane. It localises to the membrane. Its subcellular location is the perikaryon. It is found in the cell projection. The protein localises to the dendrite. The protein resides in the nucleus. Regulates G protein-coupled receptor signaling cascades, including signaling via muscarinic acetylcholine receptor CHRM2 and dopamine receptor DRD2. Inhibits signal transduction by increasing the GTPase activity of G protein alpha subunits, thereby driving them into their inactive GDP-bound form. Modulates the activity of potassium channels that are activated in response to DRD2 and CHRM2 signaling. This is Regulator of G-protein signaling 8 (RGS8) from Macaca fascicularis (Crab-eating macaque).